The chain runs to 147 residues: Hemoglobin subunit epsilon (147 aa).

Residues 3-147 (HFTAEEKAAI…VAIALGHKYH (145 aa)) form the Globin domain. Residues Ser14 and Ser51 each carry the phosphoserine modification. His64 and His93 together coordinate heme b.

It belongs to the globin family. As to quaternary structure, heterotetramer of two alpha chains and two epsilon chains in early embryonic hemoglobin Gower-2; two zeta chains and two epsilon chains in early embryonic hemoglobin Gower-1. As to expression, red blood cells.

Functionally, the epsilon chain is a beta-type chain of early mammalian embryonic hemoglobin. In Pithecia irrorata (Gray monk saki), this protein is Hemoglobin subunit epsilon (HBE1).